The sequence spans 184 residues: Ribosome-recycling factor (184 aa).

This sequence belongs to the RRF family.

The protein localises to the cytoplasm. Responsible for the release of ribosomes from messenger RNA at the termination of protein biosynthesis. May increase the efficiency of translation by recycling ribosomes from one round of translation to another. The polypeptide is Ribosome-recycling factor (Acinetobacter baylyi (strain ATCC 33305 / BD413 / ADP1)).